Reading from the N-terminus, the 331-residue chain is Adenosine deaminase (331 aa).

Residues histidine 12 and histidine 14 each coordinate Zn(2+). Positions 14 and 16 each coordinate substrate. Histidine 197 contacts Zn(2+). Glutamate 200 serves as the catalytic Proton donor. Aspartate 278 is a Zn(2+) binding site.

The protein belongs to the metallo-dependent hydrolases superfamily. Adenosine and AMP deaminases family. Adenosine deaminase subfamily. Zn(2+) serves as cofactor.

It catalyses the reaction adenosine + H2O + H(+) = inosine + NH4(+). The catalysed reaction is 2'-deoxyadenosine + H2O + H(+) = 2'-deoxyinosine + NH4(+). Functionally, catalyzes the hydrolytic deamination of adenosine and 2-deoxyadenosine. This Shewanella pealeana (strain ATCC 700345 / ANG-SQ1) protein is Adenosine deaminase.